The chain runs to 275 residues: Large ribosomal subunit protein uL2 (275 aa).

Residues 223–275 are disordered; it reads VAMNPIDHPHGGGEGRTSGGRHPVSPWGVPTKGYKTRSNKRTDKYIVRRRNKK.

It belongs to the universal ribosomal protein uL2 family. In terms of assembly, part of the 50S ribosomal subunit. Forms a bridge to the 30S subunit in the 70S ribosome.

One of the primary rRNA binding proteins. Required for association of the 30S and 50S subunits to form the 70S ribosome, for tRNA binding and peptide bond formation. It has been suggested to have peptidyltransferase activity; this is somewhat controversial. Makes several contacts with the 16S rRNA in the 70S ribosome. In Shewanella woodyi (strain ATCC 51908 / MS32), this protein is Large ribosomal subunit protein uL2.